The chain runs to 347 residues: Dihydroorotase (347 aa).

Zn(2+) contacts are provided by His-14 and His-16. Substrate contacts are provided by residues 16–18 and Asn-42; that span reads HLR. Positions 100, 137, and 175 each coordinate Zn(2+). Residue Lys-100 is modified to N6-carboxylysine. Position 137 (His-137) interacts with substrate. Leu-220 contributes to the substrate binding site. Asp-248 contributes to the Zn(2+) binding site. Asp-248 is a catalytic residue. Substrate is bound by residues His-252 and Ala-264.

The protein belongs to the metallo-dependent hydrolases superfamily. DHOase family. Class II DHOase subfamily. As to quaternary structure, homodimer. It depends on Zn(2+) as a cofactor.

The enzyme catalyses (S)-dihydroorotate + H2O = N-carbamoyl-L-aspartate + H(+). It functions in the pathway pyrimidine metabolism; UMP biosynthesis via de novo pathway; (S)-dihydroorotate from bicarbonate: step 3/3. Functionally, catalyzes the reversible cyclization of carbamoyl aspartate to dihydroorotate. This Jannaschia sp. (strain CCS1) protein is Dihydroorotase.